Here is a 206-residue protein sequence, read N- to C-terminus: Small ribosomal subunit protein uS4 (206 aa).

The interval 23 to 47 is disordered; the sequence is AKSPLNRREYGPGQHGQRRKGKLSD. The S4 RNA-binding domain occupies 94–157; sequence RRLDAVIYRA…RQLAIVLESV (64 aa).

This sequence belongs to the universal ribosomal protein uS4 family. Part of the 30S ribosomal subunit. Contacts protein S5. The interaction surface between S4 and S5 is involved in control of translational fidelity.

One of the primary rRNA binding proteins, it binds directly to 16S rRNA where it nucleates assembly of the body of the 30S subunit. Functionally, with S5 and S12 plays an important role in translational accuracy. This chain is Small ribosomal subunit protein uS4, found in Paracoccus denitrificans (strain Pd 1222).